The primary structure comprises 926 residues: Mating-type protein A-alpha Y3 (926 aa).

Positions Tyr147–Leu206 form a DNA-binding region, homeobox. 4 disordered regions span residues Ser238–Lys281, Gln308–Ala374, Gly424–Asn452, and Arg625–Ser734. Basic and acidic residues-rich tracts occupy residues Lys267–Lys281 and Asn326–Ser338. The span at Pro428–Thr441 shows a compositional bias: polar residues. The span at Lys632–Arg660 shows a compositional bias: basic and acidic residues. Composition is skewed to low complexity over residues Ser669 to Ser687 and Ser699 to Ser724.

The protein localises to the nucleus. Its function is as follows. Specifies A-alpha-3 mating-type. May regulate the expression of genes specific to the homokaryotic cell type. The chain is Mating-type protein A-alpha Y3 from Schizophyllum commune (Split gill fungus).